Consider the following 202-residue polypeptide: Coiled-coil domain-containing protein 69 (202 aa).

The segment covering 1–11 (MGCRQSRHSRG) has biased composition (basic residues). 2 disordered regions span residues 1 to 20 (MGCRQSRHSRGKRAEKVEET) and 32 to 52 (GRILEGRHEEAGQVPQTSNAQ). G2 carries the N-myristoyl glycine lipid modification. The segment covering 32–42 (GRILEGRHEEA) has biased composition (basic and acidic residues). Residue S92 is modified to Phosphoserine. Residues 112–146 (WEQELESLHHVIEMKNERIHELEKQLFLLEMLKEK) adopt a coiled-coil conformation.

Belongs to the CCDC69 family.

Its subcellular location is the cytoplasm. It is found in the cytoskeleton. It localises to the spindle. The protein resides in the midbody. May act as a scaffold to regulate the recruitment and assembly of spindle midzone components. Required for the localization of AURKB and PLK1 to the spindle midzone. The chain is Coiled-coil domain-containing protein 69 (Ccdc69) from Mus musculus (Mouse).